A 98-amino-acid polypeptide reads, in one-letter code: EVQLVESGGGLVKPGGSLKLSCAASGFTFSDYYMYWVRQTPEKRLEWVATISDGGSYTYYPDSVKGRFTISRDNAKNNLYLQMSSLKSEDTAMYYCAR.

Residues 1–98 (EVQLVESGGG…EDTAMYYCAR (98 aa)) form the Ig-like domain.

This is Ig heavy chain V region 6.96 from Mus musculus (Mouse).